A 356-amino-acid polypeptide reads, in one-letter code: MADFFASSFWTGFLWPLIIMIAQSVLLLVVLLIAIAYILLADRKIWAAVQIRRGPNVVGPFGLFQSFADLLKFVLKEPIIPAGANKGVFLLAPLVSCVLALAAWAVIPTNLGWAIADINVGILFIFAISSLSIYGIIMAGWSSNSKYPFLAALRSAAQMVSYEVSIGFVIITVLLCAGTLNLSAVVEAQHARGLASLIGLPQLTILNWYVWPLFPMFVVFYVSALAETNRPPFDLVEAESELVAGFMVEYGSTPYLLFMLGEYVAITTMCALATILFLGGWLPPIDVAPFNWVPGVIWFALKLFFMFFLIAMAKAIVPRYRYDQLMRLGWKVFLPLSLVMVVVVAGVLHFAGIAPK.

Transmembrane regions (helical) follow at residues 18-38, 87-107, 120-140, 166-186, 205-225, 265-285, 292-312, and 333-353; these read IIMIAQSVLLLVVLLIAIAYI, GVFLLAPLVSCVLALAAWAVI, VGILFIFAISSLSIYGIIMAG, IGFVIITVLLCAGTLNLSAVV, ILNWYVWPLFPMFVVFYVSAL, AITTMCALATILFLGGWLPPI, WVPGVIWFALKLFFMFFLIAM, and FLPLSLVMVVVVAGVLHFAGI.

Belongs to the complex I subunit 1 family. In terms of assembly, NDH-1 is composed of 14 different subunits. Subunits NuoA, H, J, K, L, M, N constitute the membrane sector of the complex.

It localises to the cell inner membrane. The catalysed reaction is a quinone + NADH + 5 H(+)(in) = a quinol + NAD(+) + 4 H(+)(out). Its function is as follows. NDH-1 shuttles electrons from NADH, via FMN and iron-sulfur (Fe-S) centers, to quinones in the respiratory chain. The immediate electron acceptor for the enzyme in this species is believed to be ubiquinone. Couples the redox reaction to proton translocation (for every two electrons transferred, four hydrogen ions are translocated across the cytoplasmic membrane), and thus conserves the redox energy in a proton gradient. This subunit may bind ubiquinone. This is NADH-quinone oxidoreductase subunit H from Bradyrhizobium sp. (strain ORS 278).